We begin with the raw amino-acid sequence, 105 residues long: MQVQILALSRSLARAGVDQLVLTLGFPGLPPTKQIEPGLTVRIARMSLPQIRSEITGLVGLGQAWLIGTIREWSGCVAATGGPTSSTCTRRSDLATGRGSDRRPD.

The tract at residues T80 to D105 is disordered.

This is an uncharacterized protein from Micromonospora rosea.